Reading from the N-terminus, the 358-residue chain is E3 ubiquitin-protein ligase SIS3 (358 aa).

The first 27 residues, 1–27, serve as a signal peptide directing secretion; it reads MAMRGVDFKWYDGFFLSMLATSVIIVA. 3 consecutive transmembrane segments (helical) span residues 40-60, 85-105, and 125-145; these read LHIWIVVDYTTVFIFRVFMFV, VVVLSVLSLLLYPFLWAWTVI, and GFLIWLMFSYCGLLCIAFICV. The segment at 235–276 adopts an RING-type; atypical zinc-finger fold; it reads CLICLEEFHIGHEVRGLPCAHNFHVECIDQWLRLNVKCPRCR. Positions 336 to 358 are disordered; sequence TALETAENGGVPPVLTDLSPSRR.

As to expression, expressed in roots, stems, leaves, flowers and siliques.

It is found in the membrane. The enzyme catalyses S-ubiquitinyl-[E2 ubiquitin-conjugating enzyme]-L-cysteine + [acceptor protein]-L-lysine = [E2 ubiquitin-conjugating enzyme]-L-cysteine + N(6)-ubiquitinyl-[acceptor protein]-L-lysine.. It functions in the pathway protein modification; protein ubiquitination. Its function is as follows. E3 ubiquitin protein ligase that acts as a positive regulator of sugar signaling during early seedling development. Possesses E3 ligase activity in vitro. The sequence is that of E3 ubiquitin-protein ligase SIS3 (SIS3) from Arabidopsis thaliana (Mouse-ear cress).